A 479-amino-acid chain; its full sequence is Ribosomal RNA small subunit methyltransferase F (479 aa).

Residues 125–131, Glu149, Asp176, and Asp194 each bind S-adenosyl-L-methionine; that span reads AAAPGSK. The active-site Nucleophile is the Cys247.

Belongs to the class I-like SAM-binding methyltransferase superfamily. RsmB/NOP family.

It is found in the cytoplasm. It catalyses the reaction cytidine(1407) in 16S rRNA + S-adenosyl-L-methionine = 5-methylcytidine(1407) in 16S rRNA + S-adenosyl-L-homocysteine + H(+). Functionally, specifically methylates the cytosine at position 1407 (m5C1407) of 16S rRNA. This Escherichia coli (strain K12) protein is Ribosomal RNA small subunit methyltransferase F (rsmF).